The following is a 671-amino-acid chain: APC membrane recruitment protein 2 (671 aa).

Disordered regions lie at residues 1-24 (METSRSRGGGGAVSERGGAGASVG), 76-358 (SGGT…SDPS), 391-414 (EAGPSCDKHVPGPGKPALSKKNPG), and 444-598 (SQTE…PLRT). Gly residues-rich tracts occupy residues 7–21 (RGGGGAVSERGGAGA) and 126–137 (GGDSGGGGGGRP). S162 is subject to Phosphoserine. The span at 171 to 182 (GRSENGKGEPVD) shows a compositional bias: basic and acidic residues. 2 positions are modified to phosphoserine: S229 and S233. Basic and acidic residues-rich tracts occupy residues 236–260 (CVKEETPRAAREPEEPSQDAPRDPA), 276–286 (APARSCREAEG), and 295–307 (ARGEDAAGHRRAE). The span at 342–353 (APAAPDPASVDP) shows a compositional bias: low complexity. A phosphoserine mark is found at S355 and S358. Residues 447–458 (EEQGPEPQEGAA) show a composition bias toward low complexity. Composition is skewed to basic and acidic residues over residues 472–487 (TPKDTRCVEAAKDASS) and 498–514 (IEPHPKEEPKHPEKEQQ).

The protein belongs to the Amer family. In terms of assembly, interacts with APC.

The protein localises to the cell membrane. In terms of biological role, negative regulator of the canonical Wnt signaling pathway involved in neuroectodermal patterning. Acts by specifically binding phosphatidylinositol 4,5-bisphosphate (PtdIns(4,5)P2), translocating to the cell membrane and interacting with key regulators of the canonical Wnt signaling pathway, such as components of the beta-catenin destruction complex. This Homo sapiens (Human) protein is APC membrane recruitment protein 2 (AMER2).